Consider the following 201-residue polypeptide: Pyrrolidone-carboxylate peptidase (201 aa).

Active-site residues include glutamate 78, cysteine 141, and histidine 165.

The protein belongs to the peptidase C15 family. As to quaternary structure, homotetramer.

It is found in the cytoplasm. It catalyses the reaction Release of an N-terminal pyroglutamyl group from a polypeptide, the second amino acid generally not being Pro.. Functionally, removes 5-oxoproline from various penultimate amino acid residues except L-proline. The protein is Pyrrolidone-carboxylate peptidase of Brachyspira hyodysenteriae (strain ATCC 49526 / WA1).